The chain runs to 245 residues: Complement C1q subcomponent subunit A (245 aa).

The first 22 residues, 1–22, serve as a signal peptide directing secretion; sequence MEGPRGWLVLCVLAISLASMVT. Residues 27-38 are compositionally biased toward basic and acidic residues; the sequence is RAPDGKKGEAGR. The interval 27 to 114 is disordered; sequence RAPDGKKGEA…SPGNIKDQPR (88 aa). One can recognise a Collagen-like domain in the interval 31 to 109; the sequence is GKKGEAGRPG…KGTKGSPGNI (79 aa). Position 33 is a 5-hydroxylysine (Lys33). Residue Lys33 is glycosylated (O-linked (Gal...) hydroxylysine). Residues Pro39 and Pro45 each carry the 4-hydroxyproline modification. Lys48 carries the 5-hydroxylysine modification. A glycan (O-linked (Gal...) hydroxylysine) is linked at Lys48. 4-hydroxyproline is present on residues Pro54 and Pro57. Lys67 carries the 5-hydroxylysine modification. Lys67 carries an O-linked (Gal...) hydroxylysine glycan. 4-hydroxyproline occurs at positions 73, 79, and 85. At Lys100 the chain carries 5-hydroxylysine. Lys100 is a glycosylation site (O-linked (Gal...) hydroxylysine). In terms of domain architecture, C1q spans 110–245; that stretch reads KDQPRPAFSA…FSGFLIFPSA (136 aa). The N-linked (GlcNAc...) asparagine glycan is linked to Asn146. Cysteines 172 and 190 form a disulfide. Gln199 provides a ligand contact to Ca(2+).

Core component of the complement C1 complex, a calcium-dependent complex composed of 1 molecule of the C1Q subcomplex, 2 molecules of C1R and 2 molecules of C1S. The C1Q subcomplex is composed 18 subunits: 3 chains of C1QA, C1QB, and C1QC trimerize to form 6 collagen-like triple helices connected to six globular ligand-recognition modules (C1q domain). Interacts with CR1 (via Sushi 24 and Sushi 25 domains). Interacts (via C-terminus) with CD33; this interaction activates CD33 inhibitory motifs. In terms of assembly, (Microbial infection) Interacts with Staphylococcus aureus protein Cna; this interaction results in the inhibition of the classical complement pathway. Post-translationally, O-linked glycans are assumed to be the Glc-Gal disaccharides typically found as secondary modifications of hydroxylated lysines in collagen-like domains.

The protein localises to the secreted. Its subcellular location is the cell surface. With respect to regulation, the C1Q subcomplex is inhibited by sulfated molecules, such as triterpenoid sulfates, heparan sulfate, or chondroitin sulfates. In terms of biological role, core component of the complement C1 complex, a multiprotein complex that initiates the classical pathway of the complement system, a cascade of proteins that leads to phagocytosis and breakdown of pathogens and signaling that strengthens the adaptive immune system. The classical complement pathway is initiated by the C1Q subcomplex of the C1 complex, which specifically binds IgG or IgM immunoglobulins complexed with antigens, forming antigen-antibody complexes on the surface of pathogens: C1QA, together with C1QB and C1QC, specifically recognizes and binds the Fc regions of IgG or IgM via its C1q domain. Immunoglobulin-binding activates the proenzyme C1R, which cleaves C1S, initiating the proteolytic cascade of the complement system. The C1Q subcomplex is activated by a hexamer of IgG complexed with antigens, while it is activated by a pentameric IgM. The C1Q subcomplex also recognizes and binds phosphatidylserine exposed on the surface of cells undergoing programmed cell death, possibly promoting activation of the complement system. The protein is Complement C1q subcomponent subunit A of Homo sapiens (Human).